The chain runs to 202 residues: uncharacterized protein (202 aa).

Residues 1 to 19 form the signal peptide; the sequence is MRRKNGFSVASVFILCSIA. Residues 177-199 form a helical membrane-spanning segment; sequence FLASSSSSFSSFLPSIAIILFFV.

It is found in the membrane. This is an uncharacterized protein from Caenorhabditis elegans.